Consider the following 99-residue polypeptide: Transposase InsE for insertion sequence IS3A (99 aa).

A disordered region spans residues 1–21 (MTKTVSTSKKPRKQHSPEFRS).

Belongs to the transposase 8 family.

In terms of biological role, involved in the transposition of the insertion sequence IS3. This chain is Transposase InsE for insertion sequence IS3A (insE1), found in Escherichia coli (strain K12).